The primary structure comprises 100 residues: Osteocalcin (100 aa).

Positions methionine 1–alanine 23 are cleaved as a signal peptide. A propeptide spanning residues lysine 24–arginine 51 is cleaved from the precursor. One can recognise a Gla domain in the interval tyrosine 52–glycine 98. Proline 60 is modified (4-hydroxyproline). Residues glutamate 68, glutamate 72, glutamate 75, and aspartate 81 each contribute to the Ca(2+) site. 4-carboxyglutamate occurs at positions 68, 72, and 75. An intrachain disulfide couples cysteine 74 to cysteine 80.

The protein belongs to the osteocalcin/matrix Gla protein family. Gamma-carboxyglutamate residues are formed by vitamin K dependent carboxylation by GGCX. These residues are essential for the binding of calcium. Decarboxylation promotes the hormone activity.

Its subcellular location is the secreted. In terms of biological role, the carboxylated form is one of the main organic components of the bone matrix, which constitutes 1-2% of the total bone protein. It acts as a negative regulator of bone formation and is required to limit bone formation without impairing bone resorption or mineralization. The carboxylated form binds strongly to apatite and calcium. Its function is as follows. The uncarboxylated form acts as a hormone secreted by osteoblasts, which regulates different cellular processes, such as energy metabolism, male fertility and brain development. Regulates of energy metabolism by acting as a hormone favoring pancreatic beta-cell proliferation, insulin secretion and sensitivity and energy expenditure. Uncarboxylated osteocalcin hormone also promotes testosterone production in the testes: acts as a ligand for G protein-coupled receptor GPRC6A at the surface of Leydig cells, initiating a signaling response that promotes the expression of enzymes required for testosterone synthesis in a CREB-dependent manner. Also acts as a regulator of brain development: osteocalcin hormone crosses the blood-brain barrier and acts as a ligand for GPR158 on neurons, initiating a signaling response that prevents neuronal apoptosis in the hippocampus, favors the synthesis of all monoamine neurotransmitters and inhibits that of gamma-aminobutyric acid (GABA). Osteocalcin also crosses the placenta during pregnancy and maternal osteocalcin is required for fetal brain development. This Bos taurus (Bovine) protein is Osteocalcin (BGLAP).